The following is a 267-amino-acid chain: Ribosomal RNA small subunit methyltransferase A (267 aa).

The S-adenosyl-L-methionine site is built by Asn13, Leu15, Gly39, Glu59, Asp87, and Asn106.

It belongs to the class I-like SAM-binding methyltransferase superfamily. rRNA adenine N(6)-methyltransferase family. RsmA subfamily.

The protein resides in the cytoplasm. The catalysed reaction is adenosine(1518)/adenosine(1519) in 16S rRNA + 4 S-adenosyl-L-methionine = N(6)-dimethyladenosine(1518)/N(6)-dimethyladenosine(1519) in 16S rRNA + 4 S-adenosyl-L-homocysteine + 4 H(+). In terms of biological role, specifically dimethylates two adjacent adenosines (A1518 and A1519) in the loop of a conserved hairpin near the 3'-end of 16S rRNA in the 30S particle. May play a critical role in biogenesis of 30S subunits. In Sulfurimonas denitrificans (strain ATCC 33889 / DSM 1251) (Thiomicrospira denitrificans (strain ATCC 33889 / DSM 1251)), this protein is Ribosomal RNA small subunit methyltransferase A.